Consider the following 197-residue polypeptide: dTTP/UTP pyrophosphatase (197 aa).

Asp-70 functions as the Proton acceptor in the catalytic mechanism.

It belongs to the Maf family. YhdE subfamily. A divalent metal cation serves as cofactor.

It is found in the cytoplasm. It carries out the reaction dTTP + H2O = dTMP + diphosphate + H(+). The enzyme catalyses UTP + H2O = UMP + diphosphate + H(+). In terms of biological role, nucleoside triphosphate pyrophosphatase that hydrolyzes dTTP and UTP. May have a dual role in cell division arrest and in preventing the incorporation of modified nucleotides into cellular nucleic acids. The protein is dTTP/UTP pyrophosphatase of Methanosarcina barkeri (strain Fusaro / DSM 804).